We begin with the raw amino-acid sequence, 84 residues long: Small ribosomal subunit protein uS17 (84 aa).

The protein belongs to the universal ribosomal protein uS17 family. As to quaternary structure, part of the 30S ribosomal subunit.

Functionally, one of the primary rRNA binding proteins, it binds specifically to the 5'-end of 16S ribosomal RNA. In Borrelia garinii subsp. bavariensis (strain ATCC BAA-2496 / DSM 23469 / PBi) (Borreliella bavariensis), this protein is Small ribosomal subunit protein uS17.